A 527-amino-acid chain; its full sequence is L-amino-acid oxidase (527 aa).

Residues 1–27 (MDLHRAPWKSSAAAAVLLLALFSGAAA) form the signal peptide. A disulfide bridge links Cys37 with Cys200. N-linked (GlcNAc...) asparagine glycosylation occurs at Asn58. FAD-binding positions include 70–71 (VA), 90–91 (EA), Arg98, 114–117 (GAMR), and Val288. Substrate is bound at residue Arg117. Asn393 carries N-linked (GlcNAc...) asparagine glycosylation. Tyr403 is a substrate binding site. FAD is bound by residues Glu485 and 492 to 497 (AWMESA). Substrate is bound at residue 492 to 493 (AW).

As to quaternary structure, homodimer. It depends on FAD as a cofactor. As to expression, expression mainly observed in plasma, spleen, kidney and gills with low levels detected in blood and no expression detected in brain, liver, heart, muscle or intestine (at protein level).

It localises to the secreted. It catalyses the reaction an L-alpha-amino acid + O2 + H2O = a 2-oxocarboxylate + H2O2 + NH4(+). Its function is as follows. Inhibits the growth of both Gram-negative and Gram-positive bacteria. Displays strong antibacterial activity towards V.cholerae and E.tarda. Causes deformation of the surface of S.aureus and the formation of pores on the surface of E.coli. Strong antiparasitic activity is seen towards C.irritans, T.brucei and I.multifiliis. Cilia of treated theronts are lost and the macronucleus swells, inducing cell membrane rupture and efflux of the cytoplasm. In Siganus canaliculatus (White-spotted spinefoot), this protein is L-amino-acid oxidase.